Reading from the N-terminus, the 750-residue chain is Photosystem I P700 chlorophyll a apoprotein A1 (750 aa).

The next 8 membrane-spanning stretches (helical) occupy residues 70–93 (VFSAHFGQLSIIFLWLSGMYFHGA), 156–179 (LYCTAIGALVFAALMLFAGWFHYH), 195–219 (LNHHLAGLLGLGSLSWAGHQVHVSL), 291–309 (IAHHHLAIAILFLIAGHMY), 346–369 (WHAQLSLNLAMLGSLTIVVAHHMY), 385–411 (LSLFTHHMWIGGFLIVGAAAHAAIFMV), 433–455 (AIISHLNWVCIFLGFHSFGLYIH), and 531–549 (FLVHHIHAFTIHVTVLILL). The [4Fe-4S] cluster site is built by Cys573 and Cys582. Helical transmembrane passes span 589-610 (HVFLGLFWMYNAISVVIFHFSW) and 664-686 (LSAYGLFFLGAHFVWAFSLMFLF). His675 contributes to the chlorophyll a' binding site. Met683 and Tyr691 together coordinate chlorophyll a. Position 692 (Trp692) interacts with phylloquinone. A helical transmembrane segment spans residues 724 to 744 (TVGVTHYLLGGIATTWAFFLA).

This sequence belongs to the PsaA/PsaB family. As to quaternary structure, the PsaA/B heterodimer binds the P700 chlorophyll special pair and subsequent electron acceptors. PSI consists of a core antenna complex that captures photons, and an electron transfer chain that converts photonic excitation into a charge separation. The eukaryotic PSI reaction center is composed of at least 11 subunits. The cofactor is P700 is a chlorophyll a/chlorophyll a' dimer, A0 is one or more chlorophyll a, A1 is one or both phylloquinones and FX is a shared 4Fe-4S iron-sulfur center..

The protein resides in the plastid. Its subcellular location is the chloroplast thylakoid membrane. It carries out the reaction reduced [plastocyanin] + hnu + oxidized [2Fe-2S]-[ferredoxin] = oxidized [plastocyanin] + reduced [2Fe-2S]-[ferredoxin]. Functionally, psaA and PsaB bind P700, the primary electron donor of photosystem I (PSI), as well as the electron acceptors A0, A1 and FX. PSI is a plastocyanin-ferredoxin oxidoreductase, converting photonic excitation into a charge separation, which transfers an electron from the donor P700 chlorophyll pair to the spectroscopically characterized acceptors A0, A1, FX, FA and FB in turn. Oxidized P700 is reduced on the lumenal side of the thylakoid membrane by plastocyanin. The polypeptide is Photosystem I P700 chlorophyll a apoprotein A1 (Oenothera elata subsp. hookeri (Hooker's evening primrose)).